Consider the following 524-residue polypeptide: Rho guanine nucleotide exchange factor 3 (524 aa).

Residues 75–98 (SDSRPDLFSPRPWSRNTPAANTKR) form a disordered region. The 183-residue stretch at 121-303 (IKRQEAIFEL…IQGIVAEINI (183 aa)) folds into the DH domain. The PH domain occupies 290-448 (AINIIQGIVA…QWLNCIRQAK (159 aa)).

The protein resides in the cytoplasm. In terms of biological role, acts as a guanine nucleotide exchange factor (GEF) for RhoA and RhoB GTPases. This chain is Rho guanine nucleotide exchange factor 3 (Arhgef3), found in Gallus gallus (Chicken).